Here is a 322-residue protein sequence, read N- to C-terminus: GTP 3',8-cyclase (322 aa).

In terms of domain architecture, Radical SAM core spans 5–233 (KYGRVVDYLR…NAPASIYRLD (229 aa)). Residue R14 coordinates GTP. [4Fe-4S] cluster contacts are provided by C21 and C25. S-adenosyl-L-methionine is bound at residue Y27. C28 contributes to the [4Fe-4S] cluster binding site. Position 64 (R64) interacts with GTP. G68 is a binding site for S-adenosyl-L-methionine. T95 contributes to the GTP binding site. S119 is an S-adenosyl-L-methionine binding site. GTP is bound at residue K155. Residue M189 participates in S-adenosyl-L-methionine binding. C249 and C252 together coordinate [4Fe-4S] cluster. A GTP-binding site is contributed by 254–256 (RIR). Residue C266 participates in [4Fe-4S] cluster binding.

The protein belongs to the radical SAM superfamily. MoaA family. Monomer and homodimer. Requires [4Fe-4S] cluster as cofactor.

It catalyses the reaction GTP + AH2 + S-adenosyl-L-methionine = (8S)-3',8-cyclo-7,8-dihydroguanosine 5'-triphosphate + 5'-deoxyadenosine + L-methionine + A + H(+). It functions in the pathway cofactor biosynthesis; molybdopterin biosynthesis. In terms of biological role, catalyzes the cyclization of GTP to (8S)-3',8-cyclo-7,8-dihydroguanosine 5'-triphosphate. The chain is GTP 3',8-cyclase from Campylobacter curvus (strain 525.92).